We begin with the raw amino-acid sequence, 150 residues long: Transcription antitermination protein NusB (150 aa).

Belongs to the NusB family.

In terms of biological role, involved in transcription antitermination. Required for transcription of ribosomal RNA (rRNA) genes. Binds specifically to the boxA antiterminator sequence of the ribosomal RNA (rrn) operons. This chain is Transcription antitermination protein NusB, found in Alcanivorax borkumensis (strain ATCC 700651 / DSM 11573 / NCIMB 13689 / SK2).